The following is a 504-amino-acid chain: Glycine--tRNA ligase (504 aa).

The substrate site is built by Arg99 and Glu189. Residues 221 to 223 (RNE), 231 to 236 (FRVREL), 306 to 307 (EI), and 365 to 368 (GVDR) contribute to the ATP site. Substrate is bound at residue 236-240 (LEQME). A substrate-binding site is contributed by 361 to 365 (EPSAG).

It belongs to the class-II aminoacyl-tRNA synthetase family. As to quaternary structure, homodimer.

It localises to the cytoplasm. The catalysed reaction is tRNA(Gly) + glycine + ATP = glycyl-tRNA(Gly) + AMP + diphosphate. Catalyzes the attachment of glycine to tRNA(Gly). The polypeptide is Glycine--tRNA ligase (Deinococcus geothermalis (strain DSM 11300 / CIP 105573 / AG-3a)).